Reading from the N-terminus, the 344-residue chain is Trace amine-associated receptor 8a (344 aa).

Residues Met-1–Leu-33 are Extracellular-facing. Asn-4 and Asn-18 each carry an N-linked (GlcNAc...) asparagine glycan. Disulfide bonds link Cys-21–Cys-185 and Cys-96–Cys-189. A helical membrane pass occupies residues Leu-34–Ile-54. Topologically, residues Ser-55–Asn-67 are cytoplasmic. The chain crosses the membrane as a helical span at residues Phe-68–Ser-88. Topologically, residues Met-89–Thr-102 are extracellular. Residues Phe-103–Val-127 form a helical membrane-spanning segment. Residues Asp-128–Ser-146 are Cytoplasmic-facing. A helical membrane pass occupies residues Val-147–Phe-167. Residues Tyr-168 to Asp-196 are Extracellular-facing. The helical transmembrane segment at Trp-197–Ser-217 threads the bilayer. At Lys-218–Thr-260 the chain is on the cytoplasmic side. A helical transmembrane segment spans residues Leu-261–Ile-281. The Extracellular segment spans residues Asp-282–Ala-291. The chain crosses the membrane as a helical span at residues Tyr-292–Phe-314. The Cytoplasmic portion of the chain corresponds to Phe-315–Glu-344.

The protein belongs to the G-protein coupled receptor 1 family.

Its subcellular location is the cell membrane. Functionally, olfactory receptor activated by trace amines. Trace amine compounds are enriched in animal body fluids and act on trace amine-associated receptors (TAARs) to elicit both intraspecific and interspecific innate behaviors. Ligand-binding causes a conformation change that triggers signaling via G(s)-class of G alpha proteins (GNAL or GNAS). The sequence is that of Trace amine-associated receptor 8a from Rattus norvegicus (Rat).